A 406-amino-acid polypeptide reads, in one-letter code: Tryptophan 2,3-dioxygenase A (406 aa).

Residues F71–H75 and R143 each bind substrate. A heme-binding site is contributed by H327. T341 is a binding site for substrate.

This sequence belongs to the tryptophan 2,3-dioxygenase family. In terms of assembly, homotetramer. Dimer of dimers. The cofactor is heme.

The enzyme catalyses L-tryptophan + O2 = N-formyl-L-kynurenine. The protein operates within amino-acid degradation; L-tryptophan degradation via kynurenine pathway; L-kynurenine from L-tryptophan: step 1/2. Heme-dependent dioxygenase that catalyzes the oxidative cleavage of the L-tryptophan (L-Trp) pyrrole ring and converts L-tryptophan to N-formyl-L-kynurenine. Catalyzes the oxidative cleavage of the indole moiety. This Danio rerio (Zebrafish) protein is Tryptophan 2,3-dioxygenase A.